We begin with the raw amino-acid sequence, 411 residues long: Glutamate dehydrogenase 3, mitochondrial (411 aa).

Residues 1-18 (MNALAATSRNFRQAARLL) constitute a mitochondrion transit peptide. The active site involves Lys102.

This sequence belongs to the Glu/Leu/Phe/Val dehydrogenases family. Barely expressed in leaves, spikelets and roots. Glumes and stamens specific accumulation.

The protein localises to the mitochondrion. The enzyme catalyses L-glutamate + NAD(+) + H2O = 2-oxoglutarate + NH4(+) + NADH + H(+). It carries out the reaction L-glutamate + NADP(+) + H2O = 2-oxoglutarate + NH4(+) + NADPH + H(+). The chain is Glutamate dehydrogenase 3, mitochondrial (GDH3) from Oryza sativa subsp. japonica (Rice).